Here is a 1888-residue protein sequence, read N- to C-terminus: Nuclear pore membrane glycoprotein 210-like (1888 aa).

The first 35 residues, 1–35 (MTGCPASSRRRGFGLFFFLRLHRLLLLFLVLRGTL), serve as a signal peptide directing secretion. Asn84, Asn304, Asn348, Asn495, Asn522, Asn812, and Asn931 each carry an N-linked (GlcNAc...) asparagine glycan. Residues 1082–1154 (FPPFRLLPEK…TIQTVNEDTG (73 aa)) enclose the BIG2 domain. Residue Asn1445 is glycosylated (N-linked (GlcNAc...) asparagine). Residues 1813-1833 (ILLLTLFAVLASTASIFLAYN) form a helical membrane-spanning segment. An N-linked (GlcNAc...) asparagine glycan is attached at Asn1859.

Belongs to the NUP210 family.

It localises to the nucleus membrane. This Homo sapiens (Human) protein is Nuclear pore membrane glycoprotein 210-like (NUP210L).